The primary structure comprises 2453 residues: Nuclear receptor corepressor 1 (2453 aa).

Over residues 1 to 29 the composition is skewed to polar residues; that stretch reads MSSSGYPPNQGAFSTEQSRYPSHSVQYTF. 3 disordered regions span residues 1–116, 147–177, and 206–231; these read MSSS…QVSD, PAFG…SKLS, and QQQL…VEQK. The segment at 1–373 is interaction with ZBTB33 and HEXIM1; sequence MSSSGYPPNQ…QRGAGLSATI (373 aa). Residues 51–64 show a composition bias toward low complexity; the sequence is SQASQLLQQQQQQQ. 2 stretches are compositionally biased toward basic and acidic residues: residues 77–88 and 99–116; these read PGSDRPQERRSG and VDHD…QVSD. S172 carries the post-translational modification Phosphoserine. A coiled-coil region spans residues 174–216; the sequence is SKLSKEELIQSMDRVDREIAKVEQQILKLKKKQQQLEEEAAKP. The span at 212–221 shows a compositional bias: basic and acidic residues; sequence EAAKPPEPEK. Residue S224 is modified to Phosphoserine. Residues 254–312 form an interaction with SIN3A/B region; that stretch reads FEGLGPKVELPLYNQPSDTKVYHENIKTNQVMRKKLILFFKRRNHARKQREQKICQRYD. Residues 299 to 328 adopt a coiled-coil conformation; the sequence is ARKQREQKICQRYDQLMEAWEKKVDRIENN. The SANT 1 domain occupies 435–486; it reads QFMNVWTDHEKEIFKDKFIQHPKNFGLIASYLERKSVPDCVLYYYLTKKNEN. Disordered regions lie at residues 497-631 and 677-908; these read KRRG…TEEE and LLQQ…PERQ. Residues 501–550 are a coiled coil; the sequence is RNQQIARPSQEEKVEEKEEDKAEKTEKKEEEKKDDEEKDDKEDSKETTKE. Basic and acidic residues-rich tracts occupy residues 509–531 and 541–556; these read SQEE…KEEE and KEDS…RTEA. Positions 592–604 are enriched in low complexity; the sequence is EAAAANAAAAATE. The segment covering 605–616 has biased composition (pro residues); the sequence is EPPPPLPPPPEP. One can recognise an SANT 2 domain in the interval 622–673; it reads VETSRWTEEEMEVAKKGLVEHGRNWAAIAKMVGTKSEAQCKNFYFNYKRRHN. Positions 697 to 707 are enriched in polar residues; the sequence is QCESVASTVSA. Residues 708-727 are compositionally biased toward acidic residues; that stretch reads QEDEDIEASNEEENPEDSEG. Low complexity predominate over residues 771–787; sequence TTDPAPCASPSSAVPTT. A compositionally biased stretch (basic and acidic residues) spans 851 to 885; sequence GEGDAKERDLESTSEKTEARDEDVVVAEQIERPEP. Phosphoserine is present on S1011. The interval 1034–1058 is disordered; that stretch reads VRLPTTRPTRPPPPLIPSSKTTVAS. Residue K1117 forms a Glycyl lysine isopeptide (Lys-Gly) (interchain with G-Cter in SUMO1); alternate linkage. A Glycyl lysine isopeptide (Lys-Gly) (interchain with G-Cter in SUMO2); alternate cross-link involves residue K1117. At S1122 the chain carries Phosphoserine. K1195 participates in a covalent cross-link: Glycyl lysine isopeptide (Lys-Gly) (interchain with G-Cter in SUMO2). 5 positions are modified to phosphoserine: S1206, S1207, S1274, S1292, and S1333. K1347 is modified (N6-acetyllysine). Residue T1378 is modified to Phosphothreonine. K1400 participates in a covalent cross-link: Glycyl lysine isopeptide (Lys-Gly) (interchain with G-Cter in SUMO2). K1423 is covalently cross-linked (Glycyl lysine isopeptide (Lys-Gly) (interchain with G-Cter in SUMO2); alternate). At K1423 the chain carries N6-acetyllysine; alternate. Residues 1450–1544 form a disordered region; it reads GEPVRARHTS…SIPAKSPVPG (95 aa). Residues S1459 and S1481 each carry the phosphoserine modification. Positions 1459-1469 are enriched in polar residues; sequence SVVSSGPSVLR. The segment covering 1495–1514 has biased composition (polar residues); sequence VSYQNTISRGSPMMNRTSDV. The interaction with C1D stretch occupies residues 1510-2453; the sequence is RTSDVSSSKS…QYETLSDSDD (944 aa). K1525 participates in a covalent cross-link: Glycyl lysine isopeptide (Lys-Gly) (interchain with G-Cter in SUMO2). S1598 carries the phosphoserine modification. Disordered regions lie at residues 1697-1780 and 1902-1939; these read RPYN…VRTQ and ALPS…RTRG. Composition is skewed to basic and acidic residues over residues 1718–1745 and 1919–1937; these read AERE…RERI and AGKD…ELRT. Positions 1949–1953 match the CORNR box 1 motif; the sequence is IDVII. A disordered region spans residues 1959 to 2060; sequence SDKDARERGS…SSQSEGMGQV (102 aa). Low complexity predominate over residues 1968-1979; sequence SQSSDSSSSLSS. Phosphoserine is present on residues S1993 and S1997. Residues 2050 to 2129 form an ID1 region; that stretch reads PSSQSEGMGQ…QSQTVLHPRP (80 aa). Residues 2065 to 2068 are required for interaction with RARA in the absence of its ligand; it reads RLIT. The CORNR box 2 motif lies at 2073-2077; it reads ICQII. The span at 2088–2124 shows a compositional bias: polar residues; it reads SQASTSTFQTSPSALSSTPVRTKTSSRYSPESQSQTV. The tract at residues 2088–2174 is disordered; it reads SQASTSTFQT…SPPQGPAVHE (87 aa). Phosphoserine occurs at positions 2116, 2134, 2150, 2165, and 2198. A compositionally biased stretch (basic and acidic residues) spans 2138–2156; it reads LVDKSRGSRPGKSPERSHI. An ID2 region spans residues 2226 to 2287; the sequence is IFRKLNSSGG…EDIIRKALMG (62 aa). The CORNR box 3 motif lies at 2277–2281; it reads LEDII. The interval 2303–2396 is disordered; it reads PVGIMPGSAS…RPSSTGSTQF (94 aa). Positions 2310–2319 are enriched in low complexity; it reads SASTSVVTSS. T2412 is modified (phosphothreonine). Phosphoserine occurs at positions 2449 and 2451.

The protein belongs to the N-CoR nuclear receptor corepressors family. As to quaternary structure, forms a large corepressor complex that contains SIN3A/B and histone deacetylases HDAC1 and HDAC2. This complex associates with the thyroid receptor (TR) and the retinoid acid receptor (RAR) in the absence of ligand. Interacts directly with RARA; the interaction is facilitated with RARA trimethylation. Component of the N-Cor repressor complex, at least composed of CBFA2T3, HEXIM1, NCOR1, NCOR2, HDAC3, TBL1X, TBL1XR1, CORO2A and GPS2. Interacts with ZBTB33; the interaction serves to recruit the N-CoR complex to promoter regions containing methylated CpG dinucleotides. Interacts with TRIM28 and KDM3A. Interacts (via the RD1 domain) with BAZ1A (via its N-terminal); the interaction corepresses a number of NCOR1-regulated genes. Interacts with BCL6, C1D, DACH1, HEXIM1, HDAC7, RORA, RORC, SAP30, SIAH2, SIN3A and SIN3B. May interact with DEAF1. Interacts with RXRA. Interacts with SETD5. Interacts with VDR. Interacts with ZBTB7A. Interacts with AR. Interacts with HDAC3. In terms of processing, ubiquitinated; mediated by SIAH2 and leading to its subsequent proteasomal degradation. As to expression, ubiquitous.

It is found in the nucleus. Its function is as follows. Mediates transcriptional repression by certain nuclear receptors. Part of a complex which promotes histone deacetylation and the formation of repressive chromatin structures which may impede the access of basal transcription factors. Participates in the transcriptional repressor activity produced by BCL6. Recruited by ZBTB7A to the androgen response elements/ARE on target genes, negatively regulates androgen receptor signaling and androgen-induced cell proliferation. Mediates the NR1D1-dependent repression and circadian regulation of TSHB expression. The NCOR1-HDAC3 complex regulates the circadian expression of the core clock gene ARTNL/BMAL1 and the genes involved in lipid metabolism in the liver. The chain is Nuclear receptor corepressor 1 (Ncor1) from Mus musculus (Mouse).